Consider the following 325-residue polypeptide: Phosphatidylglycerol--prolipoprotein diacylglyceryl transferase (325 aa).

4 helical membrane-spanning segments follow: residues I19–G39, G47–G67, I93–I113, and G119–I139. R141 serves as a coordination point for a 1,2-diacyl-sn-glycero-3-phospho-(1'-sn-glycerol). A run of 3 helical transmembrane segments spans residues H175–A195, F207–R225, and L237–A257. The span at I266–T312 shows a compositional bias: basic and acidic residues. Residues I266–A325 form a disordered region. Over residues A313–A325 the composition is skewed to low complexity.

The protein belongs to the Lgt family.

The protein resides in the cell membrane. It catalyses the reaction L-cysteinyl-[prolipoprotein] + a 1,2-diacyl-sn-glycero-3-phospho-(1'-sn-glycerol) = an S-1,2-diacyl-sn-glyceryl-L-cysteinyl-[prolipoprotein] + sn-glycerol 1-phosphate + H(+). Its pathway is protein modification; lipoprotein biosynthesis (diacylglyceryl transfer). Its function is as follows. Catalyzes the transfer of the diacylglyceryl group from phosphatidylglycerol to the sulfhydryl group of the N-terminal cysteine of a prolipoprotein, the first step in the formation of mature lipoproteins. This chain is Phosphatidylglycerol--prolipoprotein diacylglyceryl transferase, found in Streptomyces griseus subsp. griseus (strain JCM 4626 / CBS 651.72 / NBRC 13350 / KCC S-0626 / ISP 5235).